A 243-amino-acid polypeptide reads, in one-letter code: 1-(5-phosphoribosyl)-5-[(5-phosphoribosylamino)methylideneamino] imidazole-4-carboxamide isomerase (243 aa).

The Proton acceptor role is filled by aspartate 8. Aspartate 129 serves as the catalytic Proton donor.

The protein belongs to the HisA/HisF family.

The protein localises to the cytoplasm. The catalysed reaction is 1-(5-phospho-beta-D-ribosyl)-5-[(5-phospho-beta-D-ribosylamino)methylideneamino]imidazole-4-carboxamide = 5-[(5-phospho-1-deoxy-D-ribulos-1-ylimino)methylamino]-1-(5-phospho-beta-D-ribosyl)imidazole-4-carboxamide. It participates in amino-acid biosynthesis; L-histidine biosynthesis; L-histidine from 5-phospho-alpha-D-ribose 1-diphosphate: step 4/9. This Moorella thermoacetica (strain ATCC 39073 / JCM 9320) protein is 1-(5-phosphoribosyl)-5-[(5-phosphoribosylamino)methylideneamino] imidazole-4-carboxamide isomerase.